The primary structure comprises 359 residues: Outer membrane protein assembly factor BamC (359 aa).

The N-terminal stretch at 1-21 is a signal peptide; that stretch reads MSTLNKYKTLIIISSLAAVSS. A lipid anchor (N-palmitoyl cysteine) is attached at Cys-22. A lipid anchor (S-diacylglycerol cysteine) is attached at Cys-22.

The protein belongs to the BamC family. As to quaternary structure, part of the Bam complex.

It is found in the cell outer membrane. Part of the outer membrane protein assembly complex, which is involved in assembly and insertion of beta-barrel proteins into the outer membrane. In Kangiella koreensis (strain DSM 16069 / JCM 12317 / KCTC 12182 / SW-125), this protein is Outer membrane protein assembly factor BamC.